The sequence spans 567 residues: Hexose transporter HXT16 (567 aa).

Over residues Met-1–Ala-19 the composition is skewed to polar residues. Residues Met-1–Trp-32 are disordered. The Cytoplasmic portion of the chain corresponds to Met-1–Leu-55. A helical membrane pass occupies residues Gly-56–Trp-76. Residues Asp-77–Gly-112 are Extracellular-facing. Residues Leu-113–Ala-133 traverse the membrane as a helical segment. Residues Asp-134–Arg-139 lie on the Cytoplasmic side of the membrane. A helical membrane pass occupies residues Leu-140 to Asn-160. Residues His-161 to Lys-170 lie on the Extracellular side of the membrane. The helical transmembrane segment at Ile-171–Ile-191 threads the bilayer. At Ala-192–Arg-197 the chain is on the cytoplasmic side. A helical membrane pass occupies residues Gly-198–Ser-218. Over Val-219–Arg-232 the chain is Extracellular. A helical transmembrane segment spans residues Ile-233–Pro-253. Over Glu-254–Glu-336 the chain is Cytoplasmic. Residues Asn-337–Thr-353 form a helical membrane-spanning segment. The Extracellular segment spans residues Asp-354–Ser-359. Residues Ile-360–Val-377 form a helical membrane-spanning segment. Over Asp-378–Lys-384 the chain is Cytoplasmic. Residues Cys-385–Val-405 form a helical membrane-spanning segment. Residues Lys-406–Val-427 lie on the Extracellular side of the membrane. A helical transmembrane segment spans residues Phe-428–Val-448. Over Ala-449–Thr-465 the chain is Cytoplasmic. Residues Ala-466–Ile-486 traverse the membrane as a helical segment. Residue His-487 is a topological domain, extracellular. Residues Phe-488–Phe-508 form a helical membrane-spanning segment. The Cytoplasmic portion of the chain corresponds to Leu-509 to Asn-567. Positions Ser-533 to Ser-555 are disordered. Positions Ser-545–Ser-555 are enriched in basic and acidic residues.

This sequence belongs to the major facilitator superfamily. Sugar transporter (TC 2.A.1.1) family.

The protein localises to the membrane. Its function is as follows. Probable glucose transporter. This is Hexose transporter HXT16 (HXT16) from Saccharomyces cerevisiae (strain ATCC 204508 / S288c) (Baker's yeast).